The primary structure comprises 153 residues: Nucleoside diphosphate kinase (153 aa).

ATP contacts are provided by Lys12, Phe60, Arg88, Thr94, Arg105, and Asn115. His118 serves as the catalytic Pros-phosphohistidine intermediate.

Belongs to the NDK family. Mg(2+) serves as cofactor.

The protein resides in the cytoplasm. The catalysed reaction is a 2'-deoxyribonucleoside 5'-diphosphate + ATP = a 2'-deoxyribonucleoside 5'-triphosphate + ADP. It carries out the reaction a ribonucleoside 5'-diphosphate + ATP = a ribonucleoside 5'-triphosphate + ADP. Its function is as follows. Major role in the synthesis of nucleoside triphosphates other than ATP. The ATP gamma phosphate is transferred to the NDP beta phosphate via a ping-pong mechanism, using a phosphorylated active-site intermediate. The sequence is that of Nucleoside diphosphate kinase from Natronomonas pharaonis (strain ATCC 35678 / DSM 2160 / CIP 103997 / JCM 8858 / NBRC 14720 / NCIMB 2260 / Gabara) (Halobacterium pharaonis).